Consider the following 185-residue polypeptide: Hypoxanthine/guanine phosphoribosyltransferase (185 aa).

This sequence belongs to the purine/pyrimidine phosphoribosyltransferase family. Archaeal HPRT subfamily. Homodimer.

It is found in the cytoplasm. It carries out the reaction IMP + diphosphate = hypoxanthine + 5-phospho-alpha-D-ribose 1-diphosphate. The catalysed reaction is GMP + diphosphate = guanine + 5-phospho-alpha-D-ribose 1-diphosphate. It functions in the pathway purine metabolism; IMP biosynthesis via salvage pathway; IMP from hypoxanthine: step 1/1. Its function is as follows. Catalyzes a salvage reaction resulting in the formation of IMP that is energically less costly than de novo synthesis. This chain is Hypoxanthine/guanine phosphoribosyltransferase (hpt), found in Methanococcus maripaludis (strain DSM 14266 / JCM 13030 / NBRC 101832 / S2 / LL).